The following is a 180-amino-acid chain: ADP-ribosylation factor 5 (180 aa).

G2 carries N-myristoyl glycine lipidation. GTP is bound by residues 24–31, 67–71, and 126–129; these read GLDAAGKT, DVGGQ, and NKQD.

The protein belongs to the small GTPase superfamily. Arf family. Interacts (when activated) with GGA1, GGA2 and GGA3; the interaction is required for proper subcellular location of GGA1, GGA2 and GGA3. Binds ASAP2. Interacts with NCS1/FREQ at the Golgi complex. Interacts with RAB11FIP3 and RAB11FIP4.

It localises to the golgi apparatus. The protein localises to the cytoplasm. Its subcellular location is the perinuclear region. The protein resides in the membrane. It is found in the trans-Golgi network membrane. Functionally, GTP-binding protein involved in protein trafficking; may modulate vesicle budding and uncoating within the Golgi apparatus. (Microbial infection) Functions as an allosteric activator of the cholera toxin catalytic subunit, an ADP-ribosyltransferase. This Homo sapiens (Human) protein is ADP-ribosylation factor 5 (ARF5).